Consider the following 199-residue polypeptide: Tegument protein UL14 homolog (199 aa).

Residues 176–191 show a composition bias toward polar residues; it reads TDMNQMQPQPISKNEN. A disordered region spans residues 176–199; the sequence is TDMNQMQPQPISKNENPPTPHTDV.

Belongs to the alphaherpesvirinae HHV-1 UL14 protein family.

It localises to the virion tegument. The protein localises to the host cytoplasm. It is found in the host nucleus. In terms of biological role, contributes to the nuclear transport of the viral transcriptional activator VP16 homolog during the early phase of infection. Therefore, participates indirectly in the regulation of the immediate-early gene expression. Additionally, seems to be important for efficient nuclear targeting of capsids. This chain is Tegument protein UL14 homolog, found in Varicella-zoster virus (strain Dumas) (HHV-3).